Here is a 669-residue protein sequence, read N- to C-terminus: DNA ligase (669 aa).

NAD(+)-binding positions include 34–38, 83–84, and glutamate 114; these read DAEYD and SL. Lysine 116 serves as the catalytic N6-AMP-lysine intermediate. Residues arginine 137, glutamate 171, lysine 287, and lysine 311 each contribute to the NAD(+) site. Zn(2+)-binding residues include cysteine 405, cysteine 408, cysteine 423, and cysteine 428. The BRCT domain occupies 591–669; it reads NVESYFAGKT…EERFLQELNK (79 aa).

It belongs to the NAD-dependent DNA ligase family. LigA subfamily. It depends on Mg(2+) as a cofactor. The cofactor is Mn(2+).

The catalysed reaction is NAD(+) + (deoxyribonucleotide)n-3'-hydroxyl + 5'-phospho-(deoxyribonucleotide)m = (deoxyribonucleotide)n+m + AMP + beta-nicotinamide D-nucleotide.. Functionally, DNA ligase that catalyzes the formation of phosphodiester linkages between 5'-phosphoryl and 3'-hydroxyl groups in double-stranded DNA using NAD as a coenzyme and as the energy source for the reaction. It is essential for DNA replication and repair of damaged DNA. In Bacillus cereus (strain B4264), this protein is DNA ligase.